Consider the following 166-residue polypeptide: 2-amino-4-hydroxy-6-hydroxymethyldihydropteridine pyrophosphokinase (166 aa).

It belongs to the HPPK family.

The catalysed reaction is 6-hydroxymethyl-7,8-dihydropterin + ATP = (7,8-dihydropterin-6-yl)methyl diphosphate + AMP + H(+). The protein operates within cofactor biosynthesis; tetrahydrofolate biosynthesis; 2-amino-4-hydroxy-6-hydroxymethyl-7,8-dihydropteridine diphosphate from 7,8-dihydroneopterin triphosphate: step 4/4. Functionally, catalyzes the transfer of pyrophosphate from adenosine triphosphate (ATP) to 6-hydroxymethyl-7,8-dihydropterin, an enzymatic step in folate biosynthesis pathway. The polypeptide is 2-amino-4-hydroxy-6-hydroxymethyldihydropteridine pyrophosphokinase (folK) (Streptococcus pyogenes serotype M6 (strain ATCC BAA-946 / MGAS10394)).